The sequence spans 388 residues: Mitochondrial distribution and morphology protein 12 (388 aa).

Residues 1 to 388 form the SMP-LTD domain; that stretch reads MSLDINWSLL…VFPNFHTVAL (388 aa). Disordered regions lie at residues 75–101 and 209–249; these read DDEG…RNEA and PMSI…KVSS. Residues 83–101 are compositionally biased toward basic and acidic residues; it reads EEKQREKEREERDKLRNEA. Residues 234-243 show a composition bias toward pro residues; that stretch reads PSPPAHPAGL.

Belongs to the MDM12 family. Component of the ER-mitochondria encounter structure (ERMES) or MDM complex, composed of MMM1, MDM10, MDM12 and MDM34. An MMM1 homodimer associates with one molecule of MDM12 on each side in a pairwise head-to-tail manner, and the SMP-LTD domains of MMM1 and MDM12 generate a continuous hydrophobic tunnel for phospholipid trafficking.

Its subcellular location is the mitochondrion outer membrane. It is found in the endoplasmic reticulum membrane. In terms of biological role, component of the ERMES/MDM complex, which serves as a molecular tether to connect the endoplasmic reticulum (ER) and mitochondria. Components of this complex are involved in the control of mitochondrial shape and protein biogenesis, and function in nonvesicular lipid trafficking between the ER and mitochondria. MDM12 is required for the interaction of the ER-resident membrane protein MMM1 and the outer mitochondrial membrane-resident beta-barrel protein MDM10. The MDM12-MMM1 subcomplex functions in the major beta-barrel assembly pathway that is responsible for biogenesis of all mitochondrial outer membrane beta-barrel proteins, and acts in a late step after the SAM complex. The MDM10-MDM12-MMM1 subcomplex further acts in the TOM40-specific pathway after the action of the MDM12-MMM1 complex. Essential for establishing and maintaining the structure of mitochondria and maintenance of mtDNA nucleoids. The sequence is that of Mitochondrial distribution and morphology protein 12 from Cryptococcus neoformans var. neoformans serotype D (strain JEC21 / ATCC MYA-565) (Filobasidiella neoformans).